Consider the following 494-residue polypeptide: NADH-quinone oxidoreductase subunit M (494 aa).

Helical transmembrane passes span 5-25, 36-58, 90-110, 119-139, 140-160, 173-193, 206-226, 252-272, 281-301, 318-338, 339-359, 376-396, 412-432, and 459-479; these read PIIS…LLFI, IYVA…YILI, IAIF…IGSI, EYLV…TAVN, LLLF…IIGV, FFLY…YIYS, LTEN…FIAF, VILA…VLLP, FAIY…LVAL, MGYV…GAIF, QMLS…TLYE, MPVL…LPST, VNVV…VYML, and ILSI…PNSI.

The protein belongs to the complex I subunit 4 family.

The protein resides in the cell membrane. The catalysed reaction is a quinone + NADH + 5 H(+)(in) = a quinol + NAD(+) + 4 H(+)(out). NDH-1 shuttles electrons from NADH, via FMN and iron-sulfur (Fe-S) centers, to quinones in the respiratory chain. Couples the redox reaction to proton translocation (for every two electrons transferred, four hydrogen ions are translocated across the cytoplasmic membrane), and thus conserves the redox energy in a proton gradient. This is NADH-quinone oxidoreductase subunit M (nuoM) from Rickettsia typhi (strain ATCC VR-144 / Wilmington).